The chain runs to 337 residues: HTH-type transcriptional repressor PurR (337 aa).

An HTH lacI-type domain is found at 2-56 (ATIKDVAKLAAVSTTTVSHVINKTRFVAEATQKRVWEAVEELNYAPSAVARSLKC). A DNA-binding region (H-T-H motif) is located at residues 4 to 23 (IKDVAKLAAVSTTTVSHVIN). Residues 48 to 56 (SAVARSLKC) mediate DNA binding. Hypoxanthine-binding residues include Phe-73, Lys-189, Thr-191, Phe-220, and Asp-276.

In terms of assembly, homodimer.

It participates in purine metabolism; purine nucleotide biosynthesis [regulation]. Is the main repressor of the genes involved in the de novo synthesis of purine nucleotides, regulating purB, purC, purEK, purF, purHD, purL, purMN and guaBA expression. PurR is allosterically activated to bind its cognate DNA by binding the purine corepressors, hypoxanthine or guanine, thereby effecting transcription repression. The chain is HTH-type transcriptional repressor PurR from Aliivibrio fischeri (strain MJ11) (Vibrio fischeri).